The following is a 118-amino-acid chain: Co-chaperonin GroES (118 aa).

It belongs to the GroES chaperonin family. Heptamer of 7 subunits arranged in a ring. Interacts with the chaperonin GroEL.

The protein localises to the cytoplasm. Together with the chaperonin GroEL, plays an essential role in assisting protein folding. The GroEL-GroES system forms a nano-cage that allows encapsulation of the non-native substrate proteins and provides a physical environment optimized to promote and accelerate protein folding. GroES binds to the apical surface of the GroEL ring, thereby capping the opening of the GroEL channel. The sequence is that of Co-chaperonin GroES from Helicobacter pylori (strain P12).